The following is a 324-amino-acid chain: Beta-ketoacyl-[acyl-carrier-protein] synthase III (324 aa).

Active-site residues include Cys-112 and His-249. The segment at 250-254 (QANRR) is ACP-binding. Residue Asn-279 is part of the active site.

Belongs to the thiolase-like superfamily. FabH family. In terms of assembly, homodimer.

The protein localises to the cytoplasm. The enzyme catalyses malonyl-[ACP] + acetyl-CoA + H(+) = 3-oxobutanoyl-[ACP] + CO2 + CoA. Its pathway is lipid metabolism; fatty acid biosynthesis. In terms of biological role, catalyzes the condensation reaction of fatty acid synthesis by the addition to an acyl acceptor of two carbons from malonyl-ACP. Catalyzes the first condensation reaction which initiates fatty acid synthesis and may therefore play a role in governing the total rate of fatty acid production. Possesses both acetoacetyl-ACP synthase and acetyl transacylase activities. Its substrate specificity determines the biosynthesis of branched-chain and/or straight-chain of fatty acids. This is Beta-ketoacyl-[acyl-carrier-protein] synthase III from Streptococcus pyogenes serotype M6 (strain ATCC BAA-946 / MGAS10394).